Here is a 424-residue protein sequence, read N- to C-terminus: WD-40 repeat-containing protein MSI3 (424 aa).

Met1 carries the N-acetylmethionine modification. 5 WD repeats span residues 167 to 207 (GHEQ…TDKV), 216 to 256 (GHQS…MQHQ), 259 to 299 (VHER…APLH), 303 to 343 (KHEG…DEQL), and 362 to 402 (GHKA…YRED). The DWD box signature appears at 233–249 (IFGSAGDDCQLVIWDLR). The tract at residues 394–424 (MAESIYREDDEDEDDDDEGNQNAQHSNENQK) is disordered. Over residues 401 to 412 (EDDEDEDDDDEG) the composition is skewed to acidic residues. Residues 413–424 (NQNAQHSNENQK) show a composition bias toward polar residues.

This sequence belongs to the WD repeat RBAP46/RBAP48/MSI1 family.

It is found in the nucleus. In terms of biological role, core histone-binding subunit that may target chromatin assembly factors, chromatin remodeling factors and histone deacetylases to their histone substrates in a manner that is regulated by nucleosomal DNA. In Arabidopsis thaliana (Mouse-ear cress), this protein is WD-40 repeat-containing protein MSI3 (MSI3).